The chain runs to 213 residues: tRNA (guanine-N(7)-)-methyltransferase (213 aa).

S-adenosyl-L-methionine-binding residues include E44, E69, D96, and D118. Residue D118 is part of the active site. K122 contributes to the substrate binding site. An interaction with RNA region spans residues 124–129; the sequence is RHEKRR. Substrate-binding positions include D154 and 191–194; that span reads TEYE.

The protein belongs to the class I-like SAM-binding methyltransferase superfamily. TrmB family. As to quaternary structure, homodimer.

The enzyme catalyses guanosine(46) in tRNA + S-adenosyl-L-methionine = N(7)-methylguanosine(46) in tRNA + S-adenosyl-L-homocysteine. It participates in tRNA modification; N(7)-methylguanine-tRNA biosynthesis. Its function is as follows. Catalyzes the formation of N(7)-methylguanine at position 46 (m7G46) in tRNA. This Bacillus subtilis (strain 168) protein is tRNA (guanine-N(7)-)-methyltransferase.